Here is a 317-residue protein sequence, read N- to C-terminus: tRNA dimethylallyltransferase (317 aa).

ATP is bound at residue 14-21 (GPTAVGKT). 16-21 (TAVGKT) serves as a coordination point for substrate. The tract at residues 39–42 (DSMQ) is interaction with substrate tRNA.

The protein belongs to the IPP transferase family. As to quaternary structure, monomer. Mg(2+) is required as a cofactor.

The catalysed reaction is adenosine(37) in tRNA + dimethylallyl diphosphate = N(6)-dimethylallyladenosine(37) in tRNA + diphosphate. Catalyzes the transfer of a dimethylallyl group onto the adenine at position 37 in tRNAs that read codons beginning with uridine, leading to the formation of N6-(dimethylallyl)adenosine (i(6)A). The protein is tRNA dimethylallyltransferase of Bacillus cereus (strain Q1).